The primary structure comprises 432 residues: Adenosine 3'-phospho 5'-phosphosulfate transporter 1 (432 aa).

The next 9 helical transmembrane spans lie at 5–25 (WWAV…ETPE), 40–60 (VVNA…VQYF), 109–129 (ALKL…WGVL), 154–174 (FLVL…CVLC), 238–258 (WEYL…LSSG), 265–285 (PATT…DSFT), 299–319 (SVQM…GSLL), 353–373 (LFIF…IMTL), and 387–407 (GHTV…ALLL). Ser427 bears the Phosphoserine mark.

Belongs to the nucleotide-sugar transporter family. SLC35B subfamily. Highly expressed in the placenta, pancreas, mammary gland and skeletal muscle. Weakly or not expressed in colon, heart and prostate. Expressed in the brain, predominantly in frontal lobe gray matter, subcortical frontal white matter and cerebellum.

It localises to the golgi apparatus membrane. It carries out the reaction 3'-phosphoadenylyl sulfate(in) + adenosine 3',5'-bisphosphate(out) = 3'-phosphoadenylyl sulfate(out) + adenosine 3',5'-bisphosphate(in). Its function is as follows. Probably functions as a 3'-phosphoadenylyl sulfate:adenosine 3',5'-bisphosphate antiporter at the Golgi membranes. Mediates the transport from the cytosol into the lumen of the Golgi of 3'-phosphoadenylyl sulfate/adenosine 3'-phospho 5'-phosphosulfate (PAPS), a universal sulfuryl donor for sulfation events that take place in that compartment. This chain is Adenosine 3'-phospho 5'-phosphosulfate transporter 1, found in Homo sapiens (Human).